The chain runs to 199 residues: Protein MM_0484 (199 aa).

Residues 5–196 (TEGRAAVKLA…EKEPDGEVIE (192 aa)) form the AMMECR1 domain.

The sequence is that of Protein MM_0484 from Methanosarcina mazei (strain ATCC BAA-159 / DSM 3647 / Goe1 / Go1 / JCM 11833 / OCM 88) (Methanosarcina frisia).